Reading from the N-terminus, the 454-residue chain is MVEILDRTYGAQFPEELECHLDLQNASANCCKFNRWGSIVAVGCTDGRVLIYDFMTRNIARTFSAHCLPVSCLSWSRDGRKLLTSSADNSIAMFDVLAGTLLHRIRFNSMVTFAMFHPRNDNKAIVLQVNKQPTVEQFSPRIQTVLANDTPGSSDESASCVSYDRKGKYIIAGTGKGKLLIYNAETLKCVAWCKQNTVQQIRQIIVPMKSRFIITNTQDRVIRTYELEDLLHQRGQMVEAKYKVLDMVNKAAWKNVCTDSDGLYVCGASTKAHSLYIWESNTGSLIKILHGNKGEALLDVQWHPTRPIILSIAQGTVSMWTQAHVENWSAFAPEFQELEENEKYIEKENEFDMEDEDADEDMTSKSQDAEDDIIDVVNVRPEDYLASSDEEDCNIMKPARNLESGPLWYIPVPLDIENADNDQRLPDDIRNLDNLLNPAWVASAKGYELSPKSK.

6 WD repeats span residues 23-64 (LQNA…RTFS), 65-104 (AHCL…LLHR), 153-192 (SSDE…CVAW), 196-235 (NTVQ…HQRG), 248-288 (VNKA…LIKI), and 292-330 (NKGE…NWSA).

As to quaternary structure, component of the SET2 complex (also known as the SET1/COMPASS complex), which contains at least set-2, swd-2.1, cfp-1, rbbp-5, wdr-5.1, dpy-30 and ash-2.

The protein localises to the nucleus. Functionally, required for di- and trimethylation at 'Lys-4' of histone H3. Regulates left/right asymmetry of ASE sensory neurons, via its role as a component of the SET2 complex. The chain is Retinoblastoma-binding protein homolog 5 (rbbp-5) from Caenorhabditis elegans.